We begin with the raw amino-acid sequence, 367 residues long: Homeobox protein Nkx-6.1 (367 aa).

Residues 36–133 form a disordered region; it reads YPAAYPPLPA…SSSSSSSASA (98 aa). 3 stretches are compositionally biased toward low complexity: residues 48 to 59, 78 to 91, and 110 to 133; these read PSSSSSSSSSSS, GGLSSLGSPPQQLS, and ASGAALPSASPSGSSSSSSSSASA. Positions 102 to 268 are repressor domain; the sequence is LSRPSMPVAS…KYLAGPERAR (167 aa). Arginine 189 is modified (asymmetric dimethylarginine). A DNA-binding region (homeobox) is located at residues 236–295; that stretch reads RKHTRPTFSGQQIFALEKTFEQTKYLAGPERARLAYSLGMTESQVKVWFQNRRTKWRKKH. A disordered region spans residues 294–367; that stretch reads KHAAEMATAK…LHASEPESSS (74 aa). The span at 304–317 shows a compositional bias: basic and acidic residues; that stretch reads KKQDSETERLKGAS. The tract at residues 306–367 is involved in DNA-binding; it reads QDSETERLKG…LHASEPESSS (62 aa).

Pancreatic beta cells.

It localises to the nucleus. Its function is as follows. Transcription factor which binds to specific A/T-rich DNA sequences in the promoter regions of a number of genes. Involved in the development of insulin-producing beta cells in the islets of Langerhans at the secondary transition. Together with NKX2-2 and IRX3 acts to restrict the generation of motor neurons to the appropriate region of the neural tube. Belongs to the class II proteins of neuronal progenitor factors, which are induced by SHH signals. This Homo sapiens (Human) protein is Homeobox protein Nkx-6.1 (NKX6-1).